A 280-amino-acid chain; its full sequence is ATP synthase gamma chain (280 aa).

This sequence belongs to the ATPase gamma chain family. In terms of assembly, F-type ATPases have 2 components, CF(1) - the catalytic core - and CF(0) - the membrane proton channel. CF(1) has five subunits: alpha(3), beta(3), gamma(1), delta(1), epsilon(1). CF(0) has three main subunits: a, b and c.

It is found in the cell membrane. Functionally, produces ATP from ADP in the presence of a proton gradient across the membrane. The gamma chain is believed to be important in regulating ATPase activity and the flow of protons through the CF(0) complex. This chain is ATP synthase gamma chain, found in Mycoplasma mycoides subsp. mycoides SC (strain CCUG 32753 / NCTC 10114 / PG1).